The following is a 432-amino-acid chain: Serine--tRNA ligase (432 aa).

238 to 240 (TAE) is a binding site for L-serine. Position 269–271 (269–271 (RSE)) interacts with ATP. Glu-292 serves as a coordination point for L-serine. 356-359 (EVSS) lines the ATP pocket. Ser-392 lines the L-serine pocket.

It belongs to the class-II aminoacyl-tRNA synthetase family. Type-1 seryl-tRNA synthetase subfamily. In terms of assembly, homodimer. The tRNA molecule binds across the dimer.

The protein localises to the cytoplasm. The catalysed reaction is tRNA(Ser) + L-serine + ATP = L-seryl-tRNA(Ser) + AMP + diphosphate + H(+). It catalyses the reaction tRNA(Sec) + L-serine + ATP = L-seryl-tRNA(Sec) + AMP + diphosphate + H(+). It functions in the pathway aminoacyl-tRNA biosynthesis; selenocysteinyl-tRNA(Sec) biosynthesis; L-seryl-tRNA(Sec) from L-serine and tRNA(Sec): step 1/1. Functionally, catalyzes the attachment of serine to tRNA(Ser). Is also able to aminoacylate tRNA(Sec) with serine, to form the misacylated tRNA L-seryl-tRNA(Sec), which will be further converted into selenocysteinyl-tRNA(Sec). This Buchnera aphidicola subsp. Baizongia pistaciae (strain Bp) protein is Serine--tRNA ligase.